Here is a 120-residue protein sequence, read N- to C-terminus: NAD(P)H-quinone oxidoreductase subunit 3, organellar chromatophore (120 aa).

The next 3 helical transmembrane spans lie at 6–26 (GYDA…LALL), 64–84 (MFAL…PWAV), and 89–109 (LGLL…IALA).

The protein belongs to the complex I subunit 3 family. As to quaternary structure, NDH is composed of at least 16 different subunits, 5 of which are encoded in the nucleus.

The protein resides in the plastid. The protein localises to the organellar chromatophore thylakoid membrane. The enzyme catalyses a plastoquinone + NADH + (n+1) H(+)(in) = a plastoquinol + NAD(+) + n H(+)(out). It catalyses the reaction a plastoquinone + NADPH + (n+1) H(+)(in) = a plastoquinol + NADP(+) + n H(+)(out). In terms of biological role, NDH shuttles electrons from NAD(P)H:plastoquinone, via FMN and iron-sulfur (Fe-S) centers, to quinones in the photosynthetic chain and possibly in a chloroplast respiratory chain. The immediate electron acceptor for the enzyme in this species is believed to be plastoquinone. Couples the redox reaction to proton translocation, and thus conserves the redox energy in a proton gradient. The chain is NAD(P)H-quinone oxidoreductase subunit 3, organellar chromatophore from Paulinella chromatophora.